Here is a 418-residue protein sequence, read N- to C-terminus: Inward rectifier potassium channel 16 (418 aa).

Topologically, residues 1–67 are cytoplasmic; the sequence is MSYYGSSYHI…VVDIFTTLVD (67 aa). A helical transmembrane segment spans residues 68-94; sequence TKWRHMFVIFSLSYILSWLIFGSVFWL. The Extracellular segment spans residues 95-117; the sequence is IAFHHGDLLNDPDITPCVDNVHS. Positions 118–134 form an intramembrane region, helical; Pore-forming; it reads FTGAFLFSLETQTTIGY. The short motif at 131 to 136 is the Selectivity filter element; the sequence is TIGYGY. Residues 135–143 are Extracellular-facing; sequence GYRCVTEEC. A helical membrane pass occupies residues 144 to 171; that stretch reads SVAVLMVILQSILSCIINTFIIGAALAK. The Cytoplasmic segment spans residues 172–418; that stretch reads MATARKRAQT…LNRISVESQM (247 aa). S373 and S375 each carry phosphoserine.

This sequence belongs to the inward rectifier-type potassium channel (TC 1.A.2.1) family. KCNJ16 subfamily. As to quaternary structure, it forms heteromeric channels with Kir4.1/KCNJ10; this interaction is required for KCNJ16 localization to the basolateral membrane in kidney cells. As a heteromer with KCNJ10, may interact with MAGI1; this interaction may facilitate KCNJ10/KCNJ16 potassium channel expression at the basolateral membrane in kidney cells. May form heteromers with Kir2.1/KCNJ2. Can form heteromeric channels with Kir4.2/KCNJ15. Widely expressed, with highest levels in adult and fetal kidney (at protein level). In the kidney, expressed in the proximal and distal convoluted tubules, but not in glomeruli nor collecting ducts.

It is found in the membrane. The protein resides in the basolateral cell membrane. It carries out the reaction K(+)(in) = K(+)(out). Its activity is regulated as follows. Channel activity is strongly regulated by variations of cytosolic pH; channels are activated by alkaline and inhibited by acidic pH values. Activated by phosphatidylinositol 4,5 biphosphate (PtdIns(4,5)P2). Its function is as follows. Inward rectifier potassium channels are characterized by a greater tendency to allow potassium to flow into the cell rather than out of it. Their voltage dependence is regulated by the concentration of extracellular potassium; as external potassium is raised, the voltage range of the channel opening shifts to more positive voltages. The inward rectification is mainly due to the blockage of outward current by internal magnesium. KCNJ16 may be involved in the regulation of fluid and pH balance. In the kidney, together with KCNJ10, mediates basolateral K(+) recycling in distal tubules; this process is critical for Na(+) reabsorption at the tubules. The polypeptide is Inward rectifier potassium channel 16 (KCNJ16) (Homo sapiens (Human)).